The chain runs to 567 residues: UPF0313 protein TM_0337 (567 aa).

In terms of domain architecture, Radical SAM core spans 288 to 560 (KAIETVKFSI…NKMKENVLFK (273 aa)). Residues C303, C307, and C310 each coordinate [4Fe-4S] cluster.

Belongs to the UPF0313 family. Requires [4Fe-4S] cluster as cofactor.

The sequence is that of UPF0313 protein TM_0337 from Thermotoga maritima (strain ATCC 43589 / DSM 3109 / JCM 10099 / NBRC 100826 / MSB8).